A 183-amino-acid chain; its full sequence is MTATAQQLEYLKNSIKSIQDYPKPGILFRDVTSLLEDPKAYALSIDLLVERYKNAGITKVVGTEARGFLFGAPVALGLGVGFVPVRKPGKLPRETISETYDLEYGTDQLEIHVDAIKPGDKVLVVDDLLATGGTIEATVKLIRRLGGEVADAAFIINLFDLGGEQRLEKQGITSYSLVPFPGH.

The protein belongs to the purine/pyrimidine phosphoribosyltransferase family. As to quaternary structure, homodimer.

The protein localises to the cytoplasm. The enzyme catalyses AMP + diphosphate = 5-phospho-alpha-D-ribose 1-diphosphate + adenine. It participates in purine metabolism; AMP biosynthesis via salvage pathway; AMP from adenine: step 1/1. In terms of biological role, catalyzes a salvage reaction resulting in the formation of AMP, that is energically less costly than de novo synthesis. In Escherichia coli (strain K12 / MC4100 / BW2952), this protein is Adenine phosphoribosyltransferase.